A 300-amino-acid chain; its full sequence is Putative S-adenosyl-L-methionine-dependent methyltransferase MMAR_1058 (300 aa).

Residues aspartate 127 and 156–157 (DL) each bind S-adenosyl-L-methionine.

It belongs to the UPF0677 family.

In terms of biological role, exhibits S-adenosyl-L-methionine-dependent methyltransferase activity. The chain is Putative S-adenosyl-L-methionine-dependent methyltransferase MMAR_1058 from Mycobacterium marinum (strain ATCC BAA-535 / M).